A 946-amino-acid chain; its full sequence is Leucine--tRNA ligase (946 aa).

The 'HIGH' region signature appears at 43-53 (PYPNGTIHIGH). Residues 638–642 (KMSKS) carry the 'KMSKS' region motif. ATP is bound at residue Lys641.

This sequence belongs to the class-I aminoacyl-tRNA synthetase family.

It localises to the cytoplasm. The enzyme catalyses tRNA(Leu) + L-leucine + ATP = L-leucyl-tRNA(Leu) + AMP + diphosphate. The protein is Leucine--tRNA ligase of Pyrobaculum calidifontis (strain DSM 21063 / JCM 11548 / VA1).